A 483-amino-acid chain; its full sequence is Alpha-tubulin N-acetyltransferase (483 aa).

The N-acetyltransferase domain maps to 1–186 (MEFRFNMHPL…NNFVVYEGFF (186 aa)). Acetyl-CoA-binding positions include 120–133 (FYVH…GLGR) and 156–165 (SEKLLGFLQK). 3 disordered regions span residues 204–231 (TASP…QTRT), 330–395 (ETLP…VLGS), and 437–472 (SVKI…GGGH). The span at 347–369 (YDFHPHHLELHDDTEGGGSHRDQ) shows a compositional bias: basic and acidic residues. Positions 370–383 (SLSPQSVSQQASPV) are enriched in low complexity.

It belongs to the acetyltransferase ATAT1 family.

It catalyses the reaction L-lysyl-[alpha-tubulin] + acetyl-CoA = N(6)-acetyl-L-lysyl-[alpha-tubulin] + CoA + H(+). Functionally, specifically acetylates 'Lys-40' in alpha-tubulin on the lumenal side of microtubules. Promotes microtubule destabilization and accelerates microtubule dynamics; this activity may be independent of acetylation activity. Acetylates alpha-tubulin with a slow enzymatic rate, due to a catalytic site that is not optimized for acetyl transfer. Enters the microtubule through each end and diffuses quickly throughout the lumen of microtubules. Acetylates only long/old microtubules because of its slow acetylation rate since it does not have time to act on dynamically unstable microtubules before the enzyme is released. The protein is Alpha-tubulin N-acetyltransferase of Anopheles gambiae (African malaria mosquito).